The chain runs to 796 residues: Histone acetyltransferase KAT2B (796 aa).

Disordered stretches follow at residues 1 to 32 (MSES…TECS), 77 to 97 (WKSQ…AEQP), and 371 to 408 (AGGG…DSKR). Over residues 10-24 (GSPAVGAAGSAPAAP) the composition is skewed to low complexity. Residues 81-94 (NPPPTPPPPTPPRA) are compositionally biased toward pro residues. Positions 392-408 (GEKRKPAEPLSHEDSKR) are enriched in basic and acidic residues. The N-acetyltransferase domain occupies 469 to 617 (LNQKPNKKIL…GATLMGCELN (149 aa)). Catalysis depends on glutamate 536, which acts as the Proton donor/acceptor. Acetyl-CoA contacts are provided by residues 540–542 (CAV), 547–553 (QVKGYGT), and 578–581 (YAIG). Positions 687 to 791 (KDPDQLYSTL…KFFYTKIKEA (105 aa)) constitute a Bromo domain.

Belongs to the acetyltransferase family. GCN5 subfamily.

The protein localises to the nucleus. Its subcellular location is the cytoplasm. It is found in the cytoskeleton. The protein resides in the microtubule organizing center. It localises to the centrosome. It carries out the reaction L-lysyl-[histone] + acetyl-CoA = N(6)-acetyl-L-lysyl-[histone] + CoA + H(+). The enzyme catalyses L-lysyl-[protein] + acetyl-CoA = N(6)-acetyl-L-lysyl-[protein] + CoA + H(+). It catalyses the reaction spermidine + acetyl-CoA = N(8)-acetylspermidine + CoA + H(+). Functions as a histone acetyltransferase (HAT) to promote transcriptional activation. Has significant histone acetyltransferase activity with core histones (H3 and H4), and also with nucleosome core particles. Has a a strong preference for acetylation of H3 at 'Lys-9' (H3K9ac). Also acetylates non-histone proteins. Involved in heart and limb development by mediating acetylation of tbx5. Also acetylates spermidine. Together with kat2a, required for growth and differentiation of craniofacial cartilage and bone by regulating acetylation of histone H3 at 'Lys-9' (H3K9ac). The chain is Histone acetyltransferase KAT2B from Danio rerio (Zebrafish).